A 339-amino-acid polypeptide reads, in one-letter code: 2-deoxy-scyllo-inosamine dehydrogenase (339 aa).

Positions 37, 59, 88, 91, 94, 102, and 143 each coordinate Zn(2+).

This sequence belongs to the zinc-containing alcohol dehydrogenase family. DOIA dehydrogenase subfamily. Zn(2+) is required as a cofactor.

It catalyses the reaction 2-deoxy-scyllo-inosamine + NADP(+) = 3-amino-2,3-dideoxy-scyllo-inosose + NADPH + H(+). It carries out the reaction 2-deoxy-scyllo-inosamine + NAD(+) = 3-amino-2,3-dideoxy-scyllo-inosose + NADH + H(+). The protein operates within metabolic intermediate biosynthesis; 2-deoxystreptamine biosynthesis; 2-deoxystreptamine from D-glucose 6-phosphate: step 3/4. It functions in the pathway antibiotic biosynthesis; tobramycin biosynthesis. Catalyzes the oxidation of 2-deoxy-scyllo-inosamine (DOIA) with NAD(+) or NADP(+), forming 3-amino-2,3-dideoxy-scyllo-inosose (amino-DOI). The chain is 2-deoxy-scyllo-inosamine dehydrogenase (tobE) from Streptoalloteichus tenebrarius (strain ATCC 17920 / DSM 40477 / JCM 4838 / CBS 697.72 / NBRC 16177 / NCIMB 11028 / NRRL B-12390 / A12253. 1 / ISP 5477) (Streptomyces tenebrarius).